The chain runs to 285 residues: Coagulation factor IX (285 aa).

The residue at position 23 (tyrosine 23) is a Sulfotyrosine. Asparagine 25 carries N-linked (GlcNAc...) asparagine glycosylation. Threonine 27 is modified (phosphothreonine; alternate). Threonine 27 carries an O-linked (GalNAc...) threonine; alternate glycan. Asparagine 45 carries N-linked (GlcNAc...) asparagine glycosylation. The O-linked (GalNAc...) threonine glycan is linked to threonine 47. The 227-residue stretch at valine 59 to tryptophan 285 folds into the Peptidase S1 domain. A disulfide bridge links cysteine 84 with cysteine 100. Histidine 99 functions as the Charge relay system in the catalytic mechanism. The Ca(2+) site is built by asparagine 115, glutamate 120, and glutamate 123. N-linked (GlcNAc...) asparagine glycans are attached at residues asparagine 127 and asparagine 138. Aspartate 147 functions as the Charge relay system in the catalytic mechanism. 2 cysteine pairs are disulfide-bonded: cysteine 214–cysteine 228 and cysteine 239–cysteine 267. Catalysis depends on serine 243, which acts as the Charge relay system.

It belongs to the peptidase S1 family. In terms of assembly, heterodimer of a light chain and a heavy chain; disulfide-linked. Interacts (inactive and activated) with F11 (activated) in calcium-dependent manner. Interacts with SERPINC1. In terms of processing, activated by factor XIa, which excises the activation peptide. The propeptide can also be removed by snake venom protease. Activated by coagulation factor VIIa-tissue factor (F7-F3) complex in calcium-dependent manner.

Its subcellular location is the secreted. The catalysed reaction is Selective cleavage of Arg-|-Ile bond in factor X to form factor Xa.. In terms of biological role, factor IX is a vitamin K-dependent plasma protein that participates in the intrinsic pathway of blood coagulation by converting factor X to its active form in the presence of Ca(2+) ions, phospholipids, and factor VIIIa. This Cavia porcellus (Guinea pig) protein is Coagulation factor IX (F9).